We begin with the raw amino-acid sequence, 574 residues long: Probable inactive serine/threonine-protein kinase slob2 (574 aa).

Residues 6–26 (YIIIAAVGGFAILTFIIIVVL) form a helical membrane-spanning segment. The region spanning 166 to 346 (YADRGSLRDF…PLHRLTYTSR (181 aa)) is the Protein kinase domain. N-linked (GlcNAc...) asparagine glycosylation occurs at N358. Residues 366–386 (SKPNSKDLSQPKLKDLKKQKK) are disordered. N-linked (GlcNAc...) asparagine glycans are attached at residues N440, N449, N453, N456, N464, N470, N477, and N483. The span at 450–493 (TTTNTTNTSTSSSLNSSFNSNVSTSYSNATTTTNTTSASSVSPP) shows a compositional bias: low complexity. A disordered region spans residues 450 to 574 (TTTNTTNTST…DKSGPLLKKS (125 aa)). Residues 494–539 (ISSPPPPPPPPPPSKSSGPPPPPPPPPKSSGPPPPPPPKSSPPPPA) show a composition bias toward pro residues. Positions 546–556 (LLSSIESFSSS) are enriched in low complexity.

The protein belongs to the protein kinase superfamily. Ser/Thr protein kinase family.

It is found in the membrane. The sequence is that of Probable inactive serine/threonine-protein kinase slob2 (slob2) from Dictyostelium discoideum (Social amoeba).